Consider the following 328-residue polypeptide: Gonadotropin-releasing hormone receptor (328 aa).

Residues 1-38 are Extracellular-facing; it reads MANSDSPEQNENHCSAINSSIPLTPGSLPTLTLSGKIR. N-linked (GlcNAc...) asparagine glycosylation occurs at Asn18. The chain crosses the membrane as a helical span at residues 39 to 58; sequence VTVTFFLFLLSTIFNTSFLL. Residues 59–77 are Cytoplasmic-facing; that stretch reads KLQNWTQRKEKRKKLSRMK. Residues 78–97 form a helical membrane-spanning segment; the sequence is LLLKHLTLANLLETLIVMPL. The Extracellular portion of the chain corresponds to 98-115; the sequence is DGMWNITVQWYAGELLCK. Asn102 is a glycosylation site (N-linked (GlcNAc...) asparagine). A disulfide bridge connects residues Cys114 and Cys196. A helical transmembrane segment spans residues 116–137; the sequence is VLSYLKLFSMYAPAFMMVVISL. The Cytoplasmic segment spans residues 138–164; sequence DRSLAITKPLAVKSNSKLGQFMIGLAW. A helical transmembrane segment spans residues 165-184; the sequence is LLSSIFAGPQLYIFGMIHLA. At 185–212 the chain is on the extracellular side; it reads DDSGQTEGFSQCVTHCSFPQWWHQAFYN. A helical transmembrane segment spans residues 213 to 232; that stretch reads FFTFSCLFIIPLLIMVICNA. Topologically, residues 233 to 281 are cytoplasmic; that stretch reads KIIFTLTRVLHQDPHKLQLNQSKNNIPRARLRTLKMTVAFATSFTVCWT. The chain crosses the membrane as a helical span at residues 282 to 300; that stretch reads PYYVLGIWYWFDPDMVNRV. The Extracellular segment spans residues 301-306; the sequence is SDPVNH. A helical transmembrane segment spans residues 307-326; the sequence is FFFLFAFLNPCFDPLIYGYF. Over 327 to 328 the chain is Cytoplasmic; the sequence is SL.

This sequence belongs to the G-protein coupled receptor 1 family.

The protein localises to the cell membrane. Functionally, receptor for gonadotropin releasing hormone (GnRH) that mediates the action of GnRH to stimulate the secretion of the gonadotropic hormones luteinizing hormone (LH) and follicle-stimulating hormone (FSH). This receptor mediates its action by association with G-proteins that activate a phosphatidylinositol-calcium second messenger system. The protein is Gonadotropin-releasing hormone receptor (GNRHR) of Bos taurus (Bovine).